The following is a 912-amino-acid chain: Receptor protein kinase WSS1 (912 aa).

Positions 1-27 are cleaved as a signal peptide; it reads MGRDARRLPLLPFLLLLLAAAAGVAES. Topologically, residues 28–477 are extracellular; sequence ATDAEAIHDL…AGGGKSKPNT (450 aa). 3 LRR repeats span residues 64-88, 89-111, and 112-134; these read AGKVTELNLADRGLSGTLPDSLSSL, TSLTALQLQGNALTGAVPSLARM, and GSLARLALDGNAFTSLPPDFLHG. N-linked (GlcNAc...) asparagine glycans are attached at residues Asn-159, Asn-170, Asn-196, Asn-256, Asn-286, Asn-371, Asn-376, Asn-387, and Asn-400. LRR repeat units lie at residues 184–208, 235–261, 281–303, 364–388, 389–411, and 413–438; these read LVSLRNLRLSYNNLTGGLPPELSSL, MKSLKLLWIQSNKFTGPIPDLNGTQLE, LMSLKNVSLSNNNFQGPKPAFAA, SSDVSMINLSRKNLSGRISPALANL, TRLARLDLSNNNLTGVIPDVLTT, and PSLTVLNVANNRLTGEVPKFKPSVNV. Residues 448 to 472 form a disordered region; sequence SSGSSGGGGGSDGDSSSSDSAGGGK. A helical transmembrane segment spans residues 478–498; that stretch reads GMIIGIIVAVIILFACIALLV. Residues 499-912 are Cytoplasmic-facing; sequence HHRKKKNVEK…SFNVPRKYNG (414 aa). Residues 580–859 form the Protein kinase domain; the sequence is FSEDCILGRG…HCVNRLSSLV (280 aa). Residues 586–594 and Lys-607 contribute to the ATP site; that span reads LGRGGFGVV. Asp-708 functions as the Proton acceptor in the catalytic mechanism.

This sequence belongs to the protein kinase superfamily. Ser/Thr protein kinase family. The cofactor is Mn(2+). As to expression, expressed in young and mature leaves.

The protein resides in the cell membrane. The enzyme catalyses L-seryl-[protein] + ATP = O-phospho-L-seryl-[protein] + ADP + H(+). It carries out the reaction L-threonyl-[protein] + ATP = O-phospho-L-threonyl-[protein] + ADP + H(+). Functionally, transmembrane kinase receptor involved in the regulation of reactive oxygen species (ROS) homeostasis, chloroplast development and leaf senescence. This chain is Receptor protein kinase WSS1, found in Oryza sativa subsp. japonica (Rice).